Here is a 185-residue protein sequence, read N- to C-terminus: Adenine phosphoribosyltransferase (185 aa).

This sequence belongs to the purine/pyrimidine phosphoribosyltransferase family. As to quaternary structure, homodimer.

The protein resides in the cytoplasm. The enzyme catalyses AMP + diphosphate = 5-phospho-alpha-D-ribose 1-diphosphate + adenine. Its pathway is purine metabolism; AMP biosynthesis via salvage pathway; AMP from adenine: step 1/1. Catalyzes a salvage reaction resulting in the formation of AMP, that is energically less costly than de novo synthesis. The chain is Adenine phosphoribosyltransferase from Pectobacterium atrosepticum (strain SCRI 1043 / ATCC BAA-672) (Erwinia carotovora subsp. atroseptica).